The sequence spans 282 residues: MATSSSSYGIEQLQKGCYYEWMSVQAKHIVDLKEALMSHRSKEDHKLEELVGKIVNDFQKYTEKRSELSRRSCSSYFAPSWNSPLENGLLWMGGCRPSSFIRVIYSLCGSQAETQLSQYLLKIDENVEVNHGGSMSDLNASQLAKINDLHIKVIEKEDKITKKSANLQENVADMPIAIAAYATDLMNGDVVVEDALDKYEEGMAVLMVEADKLRFETLRKIVDVVTPVQAAEFLLAGKRLHISLHEWGRVREEQRFGCVRTDAAAATGGAGTEKSKRSSLLM.

Positions 11-254 constitute a DOG1 domain; sequence EQLQKGCYYE…HEWGRVREEQ (244 aa).

The polypeptide is Protein DOG1-like 3 (Arabidopsis thaliana (Mouse-ear cress)).